The sequence spans 78 residues: MVRILCDLIRWYQQGISAQRPFRVCRFTPSCSQYMLEALQRFGLKGILLGSWRLLRCQPFSRGGYDPVPNHFTFRRQG.

This sequence belongs to the UPF0161 family.

It localises to the cell membrane. Its function is as follows. Could be involved in insertion of integral membrane proteins into the membrane. This is Putative membrane protein insertion efficiency factor from Limosilactobacillus reuteri (strain DSM 20016) (Lactobacillus reuteri).